Here is a 349-residue protein sequence, read N- to C-terminus: MHLLLAAGFGLLLLLLPPPAASKKPTQCQRCRTLVDKFNQGMANTARKNFGGGNTAWEEKTLSKYEFSEIRLLEIMEGLCDSSDFECNQLLEQQEEQLEAWWQSLKKDYPNLFEWFCVRTLKACCLPGTYGPDCKECQGGSERPCSGNGYCSGDGSRQGDGSCQCHAGYKGPLCIDCMDGYFSLQRNETHSICLACDESCKTCSGPSNKDCVQCEVGWARVEDACVDVDECAAETPPCSEAQYCENVNGSYICEECDSTCVGCTGKGPANCKECIAGYTKQSGQCADIDECSLEEKACKRRNENCYNVPGSFVCVCPDGFEETEDACVQTAQSEVTEENPTQPLSHEDL.

The N-terminal stretch at 1–22 (MHLLLAAGFGLLLLLLPPPAAS) is a signal peptide. The short motif at 28-31 (CQRC) is the CXXC element. Cystine bridges form between C28-C31, C137-C151, C145-C163, and C165-C174. The EGF-like 1 domain occupies 133 to 175 (DCKECQGGSERPCSGNGYCSGDGSRQGDGSCQCHAGYKGPLCI). A glycan (N-linked (GlcNAc...) asparagine) is linked at N187. Residues 190 to 237 (HSICLACDESCKTCSGPSNKDCVQCEVGWARVEDACVDVDECAAETPP) form an FU 1 repeat. N-linked (GlcNAc...) asparagine glycosylation occurs at N248. One copy of the FU 2 repeat lies at 250–297 (SYICEECDSTCVGCTGKGPANCKECIAGYTKQSGQCADIDECSLEEKA). The short motif at 260 to 263 (CVGC) is the CXXC element. 4 disulfides stabilise this stretch: C260-C263, C291-C305, C298-C314, and C316-C327. Residues 287–328 (DIDECSLEEKACKRRNENCYNVPGSFVCVCPDGFEETEDACV) enclose the EGF-like 2; calcium-binding domain.

The protein belongs to the CRELD family. As to quaternary structure, interacts with Chrna4. Component of a complex containing at least Creld2, Manf, Matn3 and Pdia4. In terms of tissue distribution, broadly expressed in brain (at protein level).

It localises to the endoplasmic reticulum. The catalysed reaction is Catalyzes the rearrangement of -S-S- bonds in proteins.. Protein disulfide isomerase. Might play a role in the unfolded protein response. May regulate transport of alpha4-beta2 neuronal acetylcholine receptor. The polypeptide is Protein disulfide isomerase Creld2 (Creld2) (Rattus norvegicus (Rat)).